A 37-amino-acid polypeptide reads, in one-letter code: Large ribosomal subunit protein bL36 (37 aa).

This sequence belongs to the bacterial ribosomal protein bL36 family.

In Trichlorobacter lovleyi (strain ATCC BAA-1151 / DSM 17278 / SZ) (Geobacter lovleyi), this protein is Large ribosomal subunit protein bL36.